A 370-amino-acid chain; its full sequence is 3-isopropylmalate dehydrogenase (370 aa).

77 to 90 (GPKWDGVPYDARPE) is a binding site for NAD(+). Substrate-binding residues include R97, R107, R135, and D226. Residues D226, D250, and D254 each contribute to the Mg(2+) site. 290 to 302 (GSAPDIAGKGMAN) is an NAD(+) binding site.

This sequence belongs to the isocitrate and isopropylmalate dehydrogenases family. LeuB type 1 subfamily. In terms of assembly, homodimer. Mg(2+) serves as cofactor. It depends on Mn(2+) as a cofactor.

The protein resides in the cytoplasm. It catalyses the reaction (2R,3S)-3-isopropylmalate + NAD(+) = 4-methyl-2-oxopentanoate + CO2 + NADH. The protein operates within amino-acid biosynthesis; L-leucine biosynthesis; L-leucine from 3-methyl-2-oxobutanoate: step 3/4. In terms of biological role, catalyzes the oxidation of 3-carboxy-2-hydroxy-4-methylpentanoate (3-isopropylmalate) to 3-carboxy-4-methyl-2-oxopentanoate. The product decarboxylates to 4-methyl-2 oxopentanoate. The chain is 3-isopropylmalate dehydrogenase from Rhodopseudomonas palustris (strain ATCC BAA-98 / CGA009).